Reading from the N-terminus, the 352-residue chain is Ferredoxin--NADP reductase 2 (352 aa).

FAD contacts are provided by Glu36, Lys44, Tyr48, Ile88, Leu123, Asp290, and Ser331.

This sequence belongs to the ferredoxin--NADP reductase type 2 family. In terms of assembly, homodimer. It depends on FAD as a cofactor.

It carries out the reaction 2 reduced [2Fe-2S]-[ferredoxin] + NADP(+) + H(+) = 2 oxidized [2Fe-2S]-[ferredoxin] + NADPH. This chain is Ferredoxin--NADP reductase 2, found in Exiguobacterium sibiricum (strain DSM 17290 / CCUG 55495 / CIP 109462 / JCM 13490 / 255-15).